A 785-amino-acid polypeptide reads, in one-letter code: Polyribonucleotide nucleotidyltransferase (785 aa).

Mg(2+) contacts are provided by D516 and D522. The 60-residue stretch at 582–641 folds into the KH domain; it reads PRVTTVKIPVDKIGMVIGPKGQTINAIQDETGAEISIEDDGTIYVGATNGPAAQAAVERI. Positions 653–722 constitute an S1 motif domain; the sequence is GDRFLGTVVK…QRGKIYLDKV (70 aa). Positions 722 to 785 are disordered; that stretch reads VRPEGAEAPA…SRPRRRTRRS (64 aa). Residues 734–764 show a composition bias toward basic and acidic residues; it reads AAERPAGRDRGDRGPRDRGDRGGRGPDRGDS.

It belongs to the polyribonucleotide nucleotidyltransferase family. It depends on Mg(2+) as a cofactor.

Its subcellular location is the cytoplasm. The catalysed reaction is RNA(n+1) + phosphate = RNA(n) + a ribonucleoside 5'-diphosphate. Functionally, involved in mRNA degradation. Catalyzes the phosphorolysis of single-stranded polyribonucleotides processively in the 3'- to 5'-direction. This chain is Polyribonucleotide nucleotidyltransferase, found in Salinispora tropica (strain ATCC BAA-916 / DSM 44818 / JCM 13857 / NBRC 105044 / CNB-440).